A 188-amino-acid chain; its full sequence is Elongation factor P (188 aa).

This sequence belongs to the elongation factor P family.

It localises to the cytoplasm. It functions in the pathway protein biosynthesis; polypeptide chain elongation. Involved in peptide bond synthesis. Stimulates efficient translation and peptide-bond synthesis on native or reconstituted 70S ribosomes in vitro. Probably functions indirectly by altering the affinity of the ribosome for aminoacyl-tRNA, thus increasing their reactivity as acceptors for peptidyl transferase. The chain is Elongation factor P from Exiguobacterium sp. (strain ATCC BAA-1283 / AT1b).